A 270-amino-acid polypeptide reads, in one-letter code: Formamidopyrimidine-DNA glycosylase (270 aa).

Pro2 functions as the Schiff-base intermediate with DNA in the catalytic mechanism. Glu3 acts as the Proton donor in catalysis. Lys58 (proton donor; for beta-elimination activity) is an active-site residue. Positions 91, 110, and 151 each coordinate DNA. The FPG-type zinc finger occupies Phe236–Arg270. Arg260 functions as the Proton donor; for delta-elimination activity in the catalytic mechanism.

It belongs to the FPG family. Monomer. Requires Zn(2+) as cofactor.

The enzyme catalyses Hydrolysis of DNA containing ring-opened 7-methylguanine residues, releasing 2,6-diamino-4-hydroxy-5-(N-methyl)formamidopyrimidine.. It catalyses the reaction 2'-deoxyribonucleotide-(2'-deoxyribose 5'-phosphate)-2'-deoxyribonucleotide-DNA = a 3'-end 2'-deoxyribonucleotide-(2,3-dehydro-2,3-deoxyribose 5'-phosphate)-DNA + a 5'-end 5'-phospho-2'-deoxyribonucleoside-DNA + H(+). In terms of biological role, involved in base excision repair of DNA damaged by oxidation or by mutagenic agents. Acts as a DNA glycosylase that recognizes and removes damaged bases. Has a preference for oxidized purines, such as 7,8-dihydro-8-oxoguanine (8-oxoG). Has AP (apurinic/apyrimidinic) lyase activity and introduces nicks in the DNA strand. Cleaves the DNA backbone by beta-delta elimination to generate a single-strand break at the site of the removed base with both 3'- and 5'-phosphates. This is Formamidopyrimidine-DNA glycosylase from Pseudomonas entomophila (strain L48).